Here is a 151-residue protein sequence, read N- to C-terminus: Large ribosomal subunit protein bL9 (151 aa).

The protein belongs to the bacterial ribosomal protein bL9 family.

Its function is as follows. Binds to the 23S rRNA. In Bordetella bronchiseptica (strain ATCC BAA-588 / NCTC 13252 / RB50) (Alcaligenes bronchisepticus), this protein is Large ribosomal subunit protein bL9.